The primary structure comprises 595 residues: Beta-(1--&gt;2)glucan export ATP-binding/permease protein NdvA (595 aa).

Helical transmembrane passes span F21–L41, L56–V76, I129–P149, L158–Q178, and I252–V272. The 281-residue stretch at F21–S301 folds into the ABC transmembrane type-1 domain. An ABC transporter domain is found at I335–A569. G368 to T375 serves as a coordination point for ATP.

Belongs to the ABC transporter superfamily. Beta-(1--&gt;2)glucan exporter (TC 3.A.1.108.1) family. As to quaternary structure, homodimer.

Its subcellular location is the cell inner membrane. The enzyme catalyses [(1-&gt;2)-beta-D-glucosyl](n)(in) + ATP + H2O = [(1-&gt;2)-beta-D-glucosyl](n)(out) + ADP + phosphate + H(+). Involved in beta-(1--&gt;2)glucan export. Transmembrane domains (TMD) form a pore in the inner membrane and the ATP-binding domain (NBD) is responsible for energy generation. In Bartonella bacilliformis (strain ATCC 35685 / KC583 / Herrer 020/F12,63), this protein is Beta-(1--&gt;2)glucan export ATP-binding/permease protein NdvA.